The primary structure comprises 139 residues: Acyl carrier protein 4, chloroplastic (139 aa).

The N-terminal 55 residues, 1–55, are a transit peptide targeting the chloroplast; it reads MASAAAGASICIKSASCSPLAPGRISSLRSVSLPVSRKSFPSLRSSKGSFARVSC. Residues 59–134 form the Carrier domain; that stretch reads PETVAKVCRI…DAADLIEKLM (76 aa). Ser-94 carries the O-(pantetheine 4'-phosphoryl)serine modification.

Belongs to the acyl carrier protein (ACP) family. Post-translationally, 4'-phosphopantetheine is transferred from CoA to a specific serine of apo-ACP by acpS. This modification is essential for activity because fatty acids are bound in thioester linkage to the sulfhydryl of the prosthetic group.

Its subcellular location is the plastid. It localises to the chloroplast. Its pathway is lipid metabolism; fatty acid biosynthesis. In terms of biological role, carrier of the growing fatty acid chain in fatty acid biosynthesis. In Cuphea lanceolata (Cigar flower), this protein is Acyl carrier protein 4, chloroplastic (ACL1).